Reading from the N-terminus, the 398-residue chain is Aldo-keto reductase ausK (398 aa).

Asp-76 provides a ligand contact to NADP(+). The active-site Proton donor is Tyr-81. His-156 is a substrate binding site. Residues 186 to 187 (CN), Gln-212, 241 to 251 (DALGSGKFQSR), and 317 to 325 (RKIQHLHDN) each bind NADP(+).

The protein belongs to the aldo/keto reductase family. Aldo/keto reductase 2 subfamily. Homodimer.

The protein operates within secondary metabolite biosynthesis; terpenoid biosynthesis. Functionally, aldo-keto reductase; part of the gene cluster B that mediates the biosynthesis of austinol and dehydroaustinol, two fungal meroterpenoids. The first step of the pathway is the synthesis of 3,5-dimethylorsellinic acid by the polyketide synthase ausA. 3,5-dimethylorsellinic acid is then prenylated by the polyprenyl transferase ausN. Further epoxidation by the FAD-dependent monooxygenase ausM and cyclization by the probable terpene cyclase ausL lead to the formation of protoaustinoid A. Protoaustinoid A is then oxidized to spiro-lactone preaustinoid A3 by the combined action of the FAD-binding monooxygenases ausB and ausC, and the dioxygenase ausE. Acid-catalyzed keto-rearrangement and ring contraction of the tetraketide portion of preaustinoid A3 by ausJ lead to the formation of preaustinoid A4. The aldo-keto reductase ausK, with the help of ausH, is involved in the next step by transforming preaustinoid A4 into isoaustinone which is in turn hydroxylated by the P450 monooxygenase ausI to form austinolide. Finally, the cytochrome P450 monooxygenase ausG modifies austinolide to austinol. Austinol can be further modified to dehydroaustinol which forms a diffusible complex with diorcinol that initiates conidiation. Due to genetic rearrangements of the clusters and the subsequent loss of some enzymes, the end products of the Emericella nidulans austinoid biosynthesis clusters are austinol and dehydroaustinol, even if additional enzymes, such as the O-acetyltransferase ausQ and the cytochrome P450 monooxygenase ausR are still functional. In Emericella nidulans (strain FGSC A4 / ATCC 38163 / CBS 112.46 / NRRL 194 / M139) (Aspergillus nidulans), this protein is Aldo-keto reductase ausK.